The chain runs to 212 residues: MGTEFNGLFDEWAHTYDSFVQGEDIQYKEVFAHYEDILEDVVNKSFGNVLEFGVGTGNLTNKLLLAGRTVYGIEPSREMRMIAKEKLPKEFSITEGDFLSFEVPNSIDTIVSTYAFHHLTDDEKNVAIAKYSQLLNKGGKIVFADTIFADQDAYDKTVETAKERGFHQLANDLQTEYYTRIPVMQTIFENNGFHVTFTRLNHFVWVMEATKQ.

S-adenosyl-L-methionine is bound by residues Gly53, Glu74, and Asp97.

This sequence belongs to the methyltransferase superfamily. YrrT family.

Functionally, could be a S-adenosyl-L-methionine-dependent methyltransferase. This is an uncharacterized protein from Bacillus cereus (strain ATCC 14579 / DSM 31 / CCUG 7414 / JCM 2152 / NBRC 15305 / NCIMB 9373 / NCTC 2599 / NRRL B-3711).